A 481-amino-acid chain; its full sequence is Protein DETOXIFICATION 12 (481 aa).

The next 12 helical transmembrane spans lie at 38 to 58 (LIFF…LQIV), 76 to 96 (LASS…SCAL), 117 to 137 (YTAM…WFNM), 154 to 174 (AGKY…LQPL), 187 to 207 (LLIT…FLVY), 214 to 234 (LGGA…LGSF), 267 to 287 (AAMI…SGLL), 296 to 316 (VLSV…AIAA), 336 to 356 (IVVY…SMSL), 380 to 400 (MAPL…LSGI), 415 to 435 (LGAF…WIHL), and 438 to 458 (VGLW…LALV).

This sequence belongs to the multi antimicrobial extrusion (MATE) (TC 2.A.66.1) family.

The protein resides in the membrane. In Arabidopsis thaliana (Mouse-ear cress), this protein is Protein DETOXIFICATION 12.